The sequence spans 63 residues: UPF0370 protein ECA1289 (63 aa).

Residues 3–23 (WLADYWWIILIILIGMLINGI) traverse the membrane as a helical segment. A disordered region spans residues 39–63 (PKLPPHRDNNDKWDNEEDDWPKKKP).

This sequence belongs to the UPF0370 family.

Its subcellular location is the cell membrane. In Pectobacterium atrosepticum (strain SCRI 1043 / ATCC BAA-672) (Erwinia carotovora subsp. atroseptica), this protein is UPF0370 protein ECA1289.